A 311-amino-acid polypeptide reads, in one-letter code: Ribonuclease HIII (311 aa).

Residues 95 to 311 (MSIVGSDEVG…NTEKAFRLLK (217 aa)) enclose the RNase H type-2 domain. A divalent metal cation is bound by residues Asp-101, Glu-102, and Asp-206.

The protein belongs to the RNase HII family. RnhC subfamily. Mn(2+) serves as cofactor. It depends on Mg(2+) as a cofactor.

The protein localises to the cytoplasm. The enzyme catalyses Endonucleolytic cleavage to 5'-phosphomonoester.. Functionally, endonuclease that specifically degrades the RNA of RNA-DNA hybrids. The polypeptide is Ribonuclease HIII (Bacillus anthracis (strain A0248)).